Consider the following 529-residue polypeptide: Endoglucanase 21 (529 aa).

The signal sequence occupies residues M1–A24. The active-site Nucleophile is the D89. A glycan (N-linked (GlcNAc...) asparagine) is linked at N342. Active-site residues include H429, D481, and E490.

It belongs to the glycosyl hydrolase 9 (cellulase E) family. Expressed in roots and flowers.

Its subcellular location is the secreted. The enzyme catalyses Endohydrolysis of (1-&gt;4)-beta-D-glucosidic linkages in cellulose, lichenin and cereal beta-D-glucans.. This Oryza sativa subsp. japonica (Rice) protein is Endoglucanase 21 (GLU9).